The sequence spans 240 residues: UPF0502 protein Veis_2102 (240 aa).

The protein belongs to the UPF0502 family.

In Verminephrobacter eiseniae (strain EF01-2), this protein is UPF0502 protein Veis_2102.